Here is a 247-residue protein sequence, read N- to C-terminus: Syntaxin-like protein fsv1 (247 aa).

Positions Asn27 to Ile94 form a coiled coil. Residues Gln88 to Gly130 form a disordered region. Residues Ser100–Gly130 are compositionally biased toward polar residues. The t-SNARE coiled-coil homology domain occupies Gln159–Val221.

The protein resides in the golgi apparatus membrane. It localises to the prevacuolar compartment membrane. Functionally, involved in vesicle-mediated protein transport between the Golgi and the vacuole. This Schizosaccharomyces pombe (strain 972 / ATCC 24843) (Fission yeast) protein is Syntaxin-like protein fsv1 (fsv1).